We begin with the raw amino-acid sequence, 711 residues long: Glycine--tRNA ligase beta subunit (711 aa).

This sequence belongs to the class-II aminoacyl-tRNA synthetase family. Tetramer of two alpha and two beta subunits.

The protein localises to the cytoplasm. The enzyme catalyses tRNA(Gly) + glycine + ATP = glycyl-tRNA(Gly) + AMP + diphosphate. The polypeptide is Glycine--tRNA ligase beta subunit (Polaromonas naphthalenivorans (strain CJ2)).